Here is a 460-residue protein sequence, read N- to C-terminus: MVDKREEVMHVAMFPWLAMGHLLPFLRLSKLLAQKGHKISFISTPRNIERLPKLQSNLASSITFVSFPLPPISGLPPSSESSMDVPYNKQQSLKAAFDLLQPPLKEFLRRSSPDWIIYDYASHWLPSIAAELGISKAFFSLFNAATLCFMGPSSSLIEEIRSTPEDFTVVPPWVPFKSNIVFRYHEVTRYVEKTEEDVTGVSDSVRFGYSIDESDAVFVRSCPEFEPEWFGLLKDLYRKPVFPIGFLPPVIEDDDAVDTTWVRIKKWLDKQRLNSVVYVSLGTEASLRHEEVTELALGLEKSETPFFWVLRNEPKIPDGFKTRVKGRGMVHVGWVPQVKILSHESVGGFLTHCGWNSVVEGLGFGKVPIFFPVLNEQGLNTRLLHGKGLGVEVSRDERDGSFDSDSVADSIRLVMIDDAGEEIRAKAKVMKDLFGNMDENIRYVDELVRFMRSKGSSSSS.

UDP-alpha-D-glucose-binding positions include T283, 335–337 (VPQ), 352–360 (HCGWNSVVE), and 374–377 (LNEQ).

The protein belongs to the UDP-glycosyltransferase family.

This is UDP-glycosyltransferase 91C1 (UGT91C1) from Arabidopsis thaliana (Mouse-ear cress).